Here is a 171-residue protein sequence, read N- to C-terminus: uncharacterized protein (171 aa).

Disordered regions lie at residues 1-50 (MSHR…THLS) and 71-91 (RIDK…PMMK).

This is an uncharacterized protein from Caenorhabditis elegans.